The sequence spans 242 residues: C-reactive protein 1.1 (242 aa).

The N-terminal stretch at 1-24 (MKTFHGPTCGTAVSLCLLLFLTSA) is a signal peptide. The 212-residue stretch at 30–241 (ITSKVKFPPS…GVVLSPNEIC (212 aa)) folds into the Pentraxin (PTX) domain. The phosphocholine site is built by Thr60 and Tyr63. Intrachain disulfides connect Cys62–Cys125 and Cys112–Cys144. Positions 85 and 86 each coordinate Ca(2+). Asn147 carries an N-linked (GlcNAc...) asparagine glycan. Residues Gln169, Asp170, and Gln180 each contribute to the Ca(2+) site. Cys207 and Cys241 are disulfide-bonded.

It belongs to the pentraxin family. Homopentamer. Pentraxin (or pentaxin) have a discoid arrangement of 5 non-covalently bound subunits. Ca(2+) serves as cofactor.

It is found in the secreted. Its function is as follows. Might serve the role of immunoglobulins. The sequence is that of C-reactive protein 1.1 from Limulus polyphemus (Atlantic horseshoe crab).